A 358-amino-acid chain; its full sequence is Peptide chain release factor 1 (358 aa).

The residue at position 233 (Gln233) is an N5-methylglutamine.

Belongs to the prokaryotic/mitochondrial release factor family. In terms of processing, methylated by PrmC. Methylation increases the termination efficiency of RF1.

The protein resides in the cytoplasm. Peptide chain release factor 1 directs the termination of translation in response to the peptide chain termination codons UAG and UAA. In Blochmanniella floridana, this protein is Peptide chain release factor 1.